Reading from the N-terminus, the 497-residue chain is Arabinose import ATP-binding protein AraG (497 aa).

ABC transporter domains are found at residues 6–242 (LRFD…MVGR) and 250–497 (FRPR…ALPA). 38-45 (GENGAGKS) contributes to the ATP binding site.

This sequence belongs to the ABC transporter superfamily. Arabinose importer (TC 3.A.1.2.2) family. As to quaternary structure, the complex is composed of two ATP-binding proteins (AraG), two transmembrane proteins (AraH) and a solute-binding protein (AraF).

The protein localises to the cell inner membrane. It carries out the reaction L-arabinose(out) + ATP + H2O = L-arabinose(in) + ADP + phosphate + H(+). Its function is as follows. Part of the ABC transporter complex AraFGH involved in arabinose import. Responsible for energy coupling to the transport system. The chain is Arabinose import ATP-binding protein AraG from Chromohalobacter salexigens (strain ATCC BAA-138 / DSM 3043 / CIP 106854 / NCIMB 13768 / 1H11).